Reading from the N-terminus, the 444-residue chain is Glutamate-1-semialdehyde 2,1-aminomutase (444 aa).

Lysine 267 bears the N6-(pyridoxal phosphate)lysine mark.

This sequence belongs to the class-III pyridoxal-phosphate-dependent aminotransferase family. HemL subfamily. As to quaternary structure, homodimer. The cofactor is pyridoxal 5'-phosphate.

The protein resides in the cytoplasm. It carries out the reaction (S)-4-amino-5-oxopentanoate = 5-aminolevulinate. It participates in porphyrin-containing compound metabolism; protoporphyrin-IX biosynthesis; 5-aminolevulinate from L-glutamyl-tRNA(Glu): step 2/2. The sequence is that of Glutamate-1-semialdehyde 2,1-aminomutase from Xylella fastidiosa (strain 9a5c).